A 433-amino-acid chain; its full sequence is Serine--tRNA ligase (433 aa).

235–237 (TSE) is a binding site for L-serine. 266–268 (RSE) contributes to the ATP binding site. Residue glutamate 289 coordinates L-serine. Position 353-356 (353-356 (EISS)) interacts with ATP. Serine 388 is a binding site for L-serine.

Belongs to the class-II aminoacyl-tRNA synthetase family. Type-1 seryl-tRNA synthetase subfamily. As to quaternary structure, homodimer. The tRNA molecule binds across the dimer.

It localises to the cytoplasm. It catalyses the reaction tRNA(Ser) + L-serine + ATP = L-seryl-tRNA(Ser) + AMP + diphosphate + H(+). It carries out the reaction tRNA(Sec) + L-serine + ATP = L-seryl-tRNA(Sec) + AMP + diphosphate + H(+). The protein operates within aminoacyl-tRNA biosynthesis; selenocysteinyl-tRNA(Sec) biosynthesis; L-seryl-tRNA(Sec) from L-serine and tRNA(Sec): step 1/1. Functionally, catalyzes the attachment of serine to tRNA(Ser). Is also able to aminoacylate tRNA(Sec) with serine, to form the misacylated tRNA L-seryl-tRNA(Sec), which will be further converted into selenocysteinyl-tRNA(Sec). This is Serine--tRNA ligase from Burkholderia cenocepacia (strain HI2424).